We begin with the raw amino-acid sequence, 427 residues long: MNSLRLEPISRVAGEVNLPGSKSVSNRALLLAALARGTTRLTNLLDSDDIRHMLAALTQLGVKYKLSADKTECTVHGLGRSFAVSAPVNLFLGNAGTAMRPLCAALCLGSGEYMLGGEPRMEERPIGHLVDALREAGAHIQYLKKDGYPPLVVDAKGLWGGDVHVDGSVSSQFLTAFLMAAPMAAGDTRIHIKGELVSKPYIDITLHIMKQFGVVIEHDNYKLFYIKGNQSYVSPGDFLVEGDASSASYFLAAGAIKGKVRVTGIGKHSIQGDIHFADVLERMGARITWGDDFIEAEQGPLHGVDMDMNHIPDAAMTIAVAALFAEGPTSIRNIYNWRVKETDRLHAMATELRKLGVEVEEGHDFITVTPPTQLKHAEIDTYNDHRIAMCFSLVALSDIAVTINDPGCTSKTFPDYFDKLASVSQAV.

3-phosphoshikimate-binding residues include lysine 22, serine 23, and arginine 27. Lysine 22 contributes to the phosphoenolpyruvate binding site. Positions 96 and 124 each coordinate phosphoenolpyruvate. Residues serine 170, serine 171, glutamine 172, serine 198, aspartate 313, asparagine 336, and lysine 340 each contribute to the 3-phosphoshikimate site. Glutamine 172 provides a ligand contact to phosphoenolpyruvate. The Proton acceptor role is filled by aspartate 313. The phosphoenolpyruvate site is built by arginine 344, arginine 386, and lysine 411.

Belongs to the EPSP synthase family. In terms of assembly, monomer.

The protein resides in the cytoplasm. The catalysed reaction is 3-phosphoshikimate + phosphoenolpyruvate = 5-O-(1-carboxyvinyl)-3-phosphoshikimate + phosphate. The protein operates within metabolic intermediate biosynthesis; chorismate biosynthesis; chorismate from D-erythrose 4-phosphate and phosphoenolpyruvate: step 6/7. Functionally, catalyzes the transfer of the enolpyruvyl moiety of phosphoenolpyruvate (PEP) to the 5-hydroxyl of shikimate-3-phosphate (S3P) to produce enolpyruvyl shikimate-3-phosphate and inorganic phosphate. This chain is 3-phosphoshikimate 1-carboxyvinyltransferase, found in Aeromonas salmonicida (strain A449).